A 96-amino-acid chain; its full sequence is Co-chaperonin GroES 2 (96 aa).

This sequence belongs to the GroES chaperonin family. In terms of assembly, heptamer of 7 subunits arranged in a ring. Interacts with the chaperonin GroEL.

It is found in the cytoplasm. In terms of biological role, together with the chaperonin GroEL, plays an essential role in assisting protein folding. The GroEL-GroES system forms a nano-cage that allows encapsulation of the non-native substrate proteins and provides a physical environment optimized to promote and accelerate protein folding. GroES binds to the apical surface of the GroEL ring, thereby capping the opening of the GroEL channel. This chain is Co-chaperonin GroES 2, found in Vibrio vulnificus (strain CMCP6).